The chain runs to 314 residues: Olfactory receptor 5P67 (314 aa).

Topologically, residues 1–28 (MAFLEDGNHTAVTEFILLGLTDDPVLRV) are extracellular. N8 carries N-linked (GlcNAc...) asparagine glycosylation. Residues 29–49 (ILFTIILCIYLVTVSGNLSTI) traverse the membrane as a helical segment. Residues 50–57 (LLIRVSSQ) are Cytoplasmic-facing. The helical transmembrane segment at 58-78 (LHHPMYFFLSHVGSVDIGYSS) threads the bilayer. Topologically, residues 79–102 (SVTPNMLVNFLVEKHTIAYLGCGI) are extracellular. A disulfide bond links C100 and C192. Residues 103–123 (QLSSAAFFGTAECFLLATMAY) form a helical membrane-spanning segment. The Cytoplasmic segment spans residues 124 to 136 (DRFVAICNPLLYS). Residues 137 to 157 (TKMSTQTCIQLVVGSYTGGIL) form a helical membrane-spanning segment. Topologically, residues 158-199 (NASFAIISFFSFLFCGPNRINHFYCDFAPLVELSCSDINVSV) are extracellular. Residues 200–220 (VITTIFSASVTIITVFVIAIS) form a helical membrane-spanning segment. Over 221–240 (YTYILITILKMRSTEGRHKA) the chain is Cytoplasmic. The helical transmembrane segment at 241 to 261 (FSTCTSYLTAVTLFYGTVTFI) threads the bilayer. Residues 262 to 274 (YVVPKSNYSTDQN) are Extracellular-facing. An N-linked (GlcNAc...) asparagine glycan is attached at N268. A helical transmembrane segment spans residues 275–295 (KVASVFYIVVIPMLNPLIYSL). At 296–314 (RNNDIKGALKRQLGKKTFS) the chain is on the cytoplasmic side.

This sequence belongs to the G-protein coupled receptor 1 family.

The protein resides in the cell membrane. Potential odorant receptor. The sequence is that of Olfactory receptor 5P67 from Mus musculus (Mouse).